Here is a 398-residue protein sequence, read N- to C-terminus: Phosphoglycerate kinase (398 aa).

Substrate is bound by residues 21–23 (DFN), Arg36, 59–62 (HFGR), Arg117, and Arg150. Residues Lys200, Glu321, and 351 to 354 (GGDS) contribute to the ATP site.

Belongs to the phosphoglycerate kinase family. Monomer.

Its subcellular location is the cytoplasm. The enzyme catalyses (2R)-3-phosphoglycerate + ATP = (2R)-3-phospho-glyceroyl phosphate + ADP. Its pathway is carbohydrate degradation; glycolysis; pyruvate from D-glyceraldehyde 3-phosphate: step 2/5. The protein is Phosphoglycerate kinase of Wolbachia sp. subsp. Drosophila simulans (strain wRi).